A 754-amino-acid polypeptide reads, in one-letter code: Relaxin receptor 2 (754 aa).

Topologically, residues 1–416 are extracellular; sequence MIVFLVFKHL…SSFEDLLANN (416 aa). The region spanning 44 to 81 is the LDL-receptor class A domain; that stretch reads SCQKGYFPCGNLTKCLPRAFHCDGKDDCGNGADEENCG. Disulfide bonds link Cys-45-Cys-58, Cys-52-Cys-71, and Cys-65-Cys-80. Asn-54 is a glycosylation site (N-linked (GlcNAc...) asparagine). Residue Asn-138 is glycosylated (N-linked (GlcNAc...) asparagine). LRR repeat units follow at residues 138-159, 162-183, 186-207, 210-231, 234-255, 258-279, 282-303, 306-327, 330-351, and 354-375; these read NVTL…VFIK, KLKK…AFFG, NLQI…IFKD, QLTW…LFTG, SLFF…MCAQ, QLNW…TFLS, SLTV…TFSS, NLGE…LFKD, LLQK…QFES, and QLQS…MFQP. Asn-274 is a glycosylation site (N-linked (GlcNAc...) asparagine). Asn-335 is a glycosylation site (N-linked (GlcNAc...) asparagine). Asn-378 carries an N-linked (GlcNAc...) asparagine glycan. The helical transmembrane segment at 417–437 threads the bilayer; sequence ILRIFVWVIAFITCFGNLFVI. Residues 438-455 lie on the Cytoplasmic side of the membrane; sequence GMRSFIKAENTTHAMSIK. The chain crosses the membrane as a helical span at residues 456 to 476; the sequence is ILCCADCLMGVYLFFVGIFDI. Residues 477 to 495 are Extracellular-facing; it reads KYRGQYQKYALLWMESVQC. A disulfide bridge links Cys-495 with Cys-573. A helical membrane pass occupies residues 496-518; that stretch reads RLMGFLAMLSTEVSVLLLTYLTL. Residues 519–537 are Cytoplasmic-facing; that stretch reads EKFLVIVFPFSNIRPGKRQ. Residues 538 to 558 form a helical membrane-spanning segment; it reads TSVILICIWMAGFLIAVIPFW. Over 559-592 the chain is Extracellular; the sequence is NKDYFGNFYGKNGVCFPLYYDQTEDIGSKGYSLG. The helical transmembrane segment at 593–613 threads the bilayer; it reads IFLGVNLLAFLIIVFSYITMF. Residues 614-639 are Cytoplasmic-facing; it reads CSIQKTALQTTEVRNCFGREVAVANR. A helical transmembrane segment spans residues 640–660; the sequence is FFFIVFSDAICWIPVFVVKIL. At 661–670 the chain is on the extracellular side; that stretch reads SLFRVEIPDT. The helical transmembrane segment at 671 to 691 threads the bilayer; that stretch reads MTSWIVIFFLPVNSALNPILY. Over 692 to 754 the chain is Cytoplasmic; the sequence is TLTTNFFKDK…LGDSIMKPVS (63 aa).

The protein belongs to the G-protein coupled receptor 1 family. As to expression, expressed mainly in the brain, kidney, muscle, testis, thyroid, uterus, peripheral blood cells and bone marrow.

It is found in the cell membrane. Functionally, receptor for relaxin. The activity of this receptor is mediated by G proteins leading to stimulation of adenylate cyclase and an increase of cAMP. May also be a receptor for Leydig insulin-like peptide (INSL3). The polypeptide is Relaxin receptor 2 (RXFP2) (Homo sapiens (Human)).